A 337-amino-acid polypeptide reads, in one-letter code: Cytoskeleton protein RodZ (337 aa).

Residues 1–111 (MNTEATHDQN…LGKRRKKRDG (111 aa)) are Cytoplasmic-facing. In terms of domain architecture, HTH cro/C1-type spans 19 to 71 (LRNAREQLGLSQQAVAERLCLKVSTVRDIEEDKAPADLASTFLRGYIRSYARL). The segment at residues 30–49 (QQAVAERLCLKVSTVRDIEE) is a DNA-binding region (H-T-H motif). The chain crosses the membrane as a helical; Signal-anchor for type II membrane protein span at residues 112–132 (WLMTFTWLVLFVVIGLSGAWW). Residues 133–337 (WQDHKAQQEE…TLNAEQSPAQ (205 aa)) lie on the Periplasmic side of the membrane. The span at 145–167 (TMADQSSAELSSNSEQGQSVPLN) shows a compositional bias: polar residues. The interval 145–218 (TMADQSSAEL…AVVSPSQANV (74 aa)) is disordered. A compositionally biased stretch (low complexity) spans 168-207 (TSTTTDPATTSTPPASVDTTATNTQTPAVTAPAPAVDPQQ). Positions 208 to 218 (NAVVSPSQANV) are enriched in polar residues.

It belongs to the RodZ family.

The protein resides in the cell inner membrane. Its function is as follows. Cytoskeletal protein that is involved in cell-shape control through regulation of the length of the long axis. This is Cytoskeleton protein RodZ from Shigella dysenteriae serotype 1 (strain Sd197).